A 123-amino-acid chain; its full sequence is Small ribosomal subunit protein uS13 (123 aa).

The disordered stretch occupies residues glycine 95–lysine 123.

It belongs to the universal ribosomal protein uS13 family. As to quaternary structure, part of the 30S ribosomal subunit. Forms a loose heterodimer with protein S19. Forms two bridges to the 50S subunit in the 70S ribosome.

Its function is as follows. Located at the top of the head of the 30S subunit, it contacts several helices of the 16S rRNA. In the 70S ribosome it contacts the 23S rRNA (bridge B1a) and protein L5 of the 50S subunit (bridge B1b), connecting the 2 subunits; these bridges are implicated in subunit movement. Contacts the tRNAs in the A and P-sites. The chain is Small ribosomal subunit protein uS13 from Desulfitobacterium hafniense (strain DSM 10664 / DCB-2).